A 428-amino-acid chain; its full sequence is ORC1-type DNA replication protein 5 (428 aa).

Residues 62 to 66, Tyr219, and Arg231 each bind ATP; that span reads TGKSL.

This sequence belongs to the CDC6/cdc18 family.

In terms of biological role, involved in regulation of DNA replication. This is ORC1-type DNA replication protein 5 (orc5) from Halobacterium salinarum (strain ATCC 700922 / JCM 11081 / NRC-1) (Halobacterium halobium).